Consider the following 211-residue polypeptide: Ribosomal RNA small subunit methyltransferase G (211 aa).

Residues glycine 75, leucine 80, 130–131 (VE), and arginine 145 each bind S-adenosyl-L-methionine.

It belongs to the methyltransferase superfamily. RNA methyltransferase RsmG family.

The protein resides in the cytoplasm. It catalyses the reaction guanosine(527) in 16S rRNA + S-adenosyl-L-methionine = N(7)-methylguanosine(527) in 16S rRNA + S-adenosyl-L-homocysteine. Specifically methylates the N7 position of guanine in position 527 of 16S rRNA. In Aromatoleum aromaticum (strain DSM 19018 / LMG 30748 / EbN1) (Azoarcus sp. (strain EbN1)), this protein is Ribosomal RNA small subunit methyltransferase G.